The following is a 453-amino-acid chain: Nuclear distribution protein PAC1 (453 aa).

Positions 19 to 51 (QKDELHKSILDYFKTNNLHESFATLMREANQEG) constitute a LisH domain. Residues 69 to 96 (TSVIRLQKKIMEMESRISQLQEELSAAP) adopt a coiled-coil conformation. WD repeat units follow at residues 120-161 (GHRL…RTLK), 162-201 (GHTK…KNIK), 205-244 (GHDH…CTKT), 247-286 (GHAE…TKVE), 314-355 (LDPN…KTLT), 356-395 (GHDN…CTRT), and 413-452 (IEAP…KIWT).

This sequence belongs to the WD repeat LIS1/nudF family. In terms of assembly, self-associates. Interacts with NDL1 and dynein.

It localises to the cytoplasm. The protein localises to the cytoskeleton. Its subcellular location is the spindle pole. Its function is as follows. Positively regulates the activity of the minus-end directed microtubule motor protein dynein. May enhance dynein-mediated microtubule sliding by targeting dynein to the microtubule plus end. Required for nuclear migration during vegetative growth as well as development. Required for localization of dynein to the mitotic spindle poles. Recruits additional proteins to the dynein complex at SPBs. Required for retrograde early endosome (EE) transport from the hyphal tip. This chain is Nuclear distribution protein PAC1, found in Mycosarcoma maydis (Corn smut fungus).